Here is a 530-residue protein sequence, read N- to C-terminus: Pentatricopeptide repeat-containing protein At3g51320 (530 aa).

PPR repeat units lie at residues 82–116, 117–151, 152–182, 183–217, 218–248, 249–283, 284–314, 315–349, 350–380, and 386–420; these read KLYCANPVFKAYLVSSSPKQALGFYFDILRFGFVP, DSYTFVSLISCIEKTCCVDSGKMCHGQAIKHGCDQ, VLPVQNSLMHMYTCCGALDLAKKLFVEIPKR, DIVSWNSIIAGMVRNGDVLAAHKLFDEMPDKNIIS, WNIMISAYLGANNPGVSISLFREMVRAGFQG, NESTLVLLLNACGRSARLKEGRSVHASLIRTFLNS, SVVIDTALIDMYGKCKEVGLARRIFDSLSIR, NKVTWNVMILAHCLHGRPEGGLELFEAMINGMLRP, DEVTFVGVLCGCARAGLVSQGQSYYSLMVDE, and NFGHQWCMANLYSSAGFPEEAEEALKNLPDEDVTP. Residues 424 to 499 form a type E motif region; the sequence is KWANLLSSSR…IPGCGLVDLK (76 aa).

This sequence belongs to the PPR family. PCMP-E subfamily.

The sequence is that of Pentatricopeptide repeat-containing protein At3g51320 from Arabidopsis thaliana (Mouse-ear cress).